The chain runs to 89 residues: Cell division topological specificity factor (89 aa).

The protein belongs to the MinE family.

Its function is as follows. Prevents the cell division inhibition by proteins MinC and MinD at internal division sites while permitting inhibition at polar sites. This ensures cell division at the proper site by restricting the formation of a division septum at the midpoint of the long axis of the cell. The sequence is that of Cell division topological specificity factor from Laribacter hongkongensis (strain HLHK9).